A 102-amino-acid polypeptide reads, in one-letter code: Small ribosomal subunit protein uS10 (102 aa).

Belongs to the universal ribosomal protein uS10 family. Part of the 30S ribosomal subunit.

Functionally, involved in the binding of tRNA to the ribosomes. The chain is Small ribosomal subunit protein uS10 from Methanoculleus marisnigri (strain ATCC 35101 / DSM 1498 / JR1).